The chain runs to 197 residues: Sec-independent protein translocase protein TatB (197 aa).

A helical membrane pass occupies residues 1–21 (MFDIGFGELLLVMVLGLIVLG). Residues 93-197 (KRGYTETPSP…ASARQPSDSR (105 aa)) are disordered. Composition is skewed to basic and acidic residues over residues 104 to 113 (KSDDPKKSGD) and 160 to 169 (NHNDGRHATS). Residues 180–197 (PEQSQPSAASARQPSDSR) show a composition bias toward low complexity.

This sequence belongs to the TatB family. As to quaternary structure, the Tat system comprises two distinct complexes: a TatABC complex, containing multiple copies of TatA, TatB and TatC subunits, and a separate TatA complex, containing only TatA subunits. Substrates initially bind to the TatABC complex, which probably triggers association of the separate TatA complex to form the active translocon.

It localises to the cell inner membrane. Functionally, part of the twin-arginine translocation (Tat) system that transports large folded proteins containing a characteristic twin-arginine motif in their signal peptide across membranes. Together with TatC, TatB is part of a receptor directly interacting with Tat signal peptides. TatB may form an oligomeric binding site that transiently accommodates folded Tat precursor proteins before their translocation. This Pectobacterium atrosepticum (strain SCRI 1043 / ATCC BAA-672) (Erwinia carotovora subsp. atroseptica) protein is Sec-independent protein translocase protein TatB.